A 474-amino-acid chain; its full sequence is Proline--tRNA ligase (474 aa).

It belongs to the class-II aminoacyl-tRNA synthetase family. ProS type 3 subfamily. As to quaternary structure, homodimer.

The protein localises to the cytoplasm. It carries out the reaction tRNA(Pro) + L-proline + ATP = L-prolyl-tRNA(Pro) + AMP + diphosphate. Its function is as follows. Catalyzes the attachment of proline to tRNA(Pro) in a two-step reaction: proline is first activated by ATP to form Pro-AMP and then transferred to the acceptor end of tRNA(Pro). The polypeptide is Proline--tRNA ligase (Phytoplasma australiense).